The primary structure comprises 861 residues: Probable linoleate 9S-lipoxygenase 7 (861 aa).

One can recognise a PLAT domain in the interval 29–160 (NVLDFTDLAG…NYKSDRIFFA (132 aa)). Positions 163-861 (PYLPSETPEL…GKGIPNSVSI (699 aa)) constitute a Lipoxygenase domain. Residues 220–246 (TLGGSAEYPYPRRGRTGRPPTRTDPKS) form a disordered region. Fe cation contacts are provided by histidine 522, histidine 527, histidine 713, asparagine 717, and isoleucine 861.

This sequence belongs to the lipoxygenase family. As to quaternary structure, monomer. Fe cation serves as cofactor. Expressed in tubers. Detected in sprouts and flowers. but not in leaves or stems.

It is found in the cytoplasm. It catalyses the reaction (9Z,12Z)-octadecadienoate + O2 = (9S)-hydroperoxy-(10E,12Z)-octadecadienoate. It functions in the pathway lipid metabolism; oxylipin biosynthesis. Functionally, plant lipoxygenases may be involved in a number of diverse aspects of plant physiology including growth and development, pest resistance, and senescence or responses to wounding. Catalyzes the hydroperoxidation of lipids containing a cis,cis-1,4-pentadiene structure. This Solanum tuberosum (Potato) protein is Probable linoleate 9S-lipoxygenase 7 (LOX1.7).